Reading from the N-terminus, the 25-residue chain is Ribosome-inactivating protein charantin (25 aa).

Monomer.

It catalyses the reaction Endohydrolysis of the N-glycosidic bond at one specific adenosine on the 28S rRNA.. Inhibits cell-free translation in a rabbit reticulocyte lysate system. The chain is Ribosome-inactivating protein charantin from Momordica charantia (Bitter gourd).